The primary structure comprises 783 residues: LPS-assembly protein LptD (783 aa).

A signal peptide spans 1–24 (MSCFSRTFLAASISAALFAPQIQA).

This sequence belongs to the LptD family. In terms of assembly, component of the lipopolysaccharide transport and assembly complex. Interacts with LptE and LptA.

Its subcellular location is the cell outer membrane. In terms of biological role, together with LptE, is involved in the assembly of lipopolysaccharide (LPS) at the surface of the outer membrane. The sequence is that of LPS-assembly protein LptD from Vibrio cholerae serotype O1 (strain ATCC 39315 / El Tor Inaba N16961).